A 233-amino-acid polypeptide reads, in one-letter code: MAKISKRINKIREGVDRNKLYDLSAAIGLVKERAVAKFDETVEIAMNLGVDPRHADQMVRGVVNLPNGTGRTVRVAVFARGDKAEEAKKAGADIVGAEELFEIVNGGKIEFDRCIATPDMMPLVGRLGKVLGPRGMMPNPKVGTVTTDVAAAVAASKGGAVEFRVEKAGIIHAGIGKVSFDNAKLEENIKTFADAVIKAKPSAAKGEYVKRVSISSTMGVGVKVDPSTVKVVD.

It belongs to the universal ribosomal protein uL1 family. In terms of assembly, part of the 50S ribosomal subunit.

Binds directly to 23S rRNA. The L1 stalk is quite mobile in the ribosome, and is involved in E site tRNA release. In terms of biological role, protein L1 is also a translational repressor protein, it controls the translation of the L11 operon by binding to its mRNA. The sequence is that of Large ribosomal subunit protein uL1 from Brucella suis (strain ATCC 23445 / NCTC 10510).